Reading from the N-terminus, the 156-residue chain is Protein GLUTAMINE DUMPER 4 (156 aa).

Topologically, residues 1 to 39 (MRPLSIKPTSLDVARHATSVESFGNHRPPISPWHSPVPY) are extracellular. A helical transmembrane segment spans residues 40–60 (LFGGLAAMLGLIAFALLILAC). The Cytoplasmic segment spans residues 61–156 (SYWRLSTSGD…AKENEETTSQ (96 aa)). Positions 67 to 87 (TSGDDSGERVDEEKESRSGVK) are disordered. Residues 72–84 (SGERVDEEKESRS) show a composition bias toward basic and acidic residues. The short motif at 99 to 103 (VIMAG) is the VIMAG element. The tract at residues 136–156 (AGEEKMGDREKAKENEETTSQ) is disordered.

Belongs to the GLUTAMINE DUMPER 1 (TC 9.B.60) family. Expressed in the vascular tissues, even in the minor veins of the leaves.

Its subcellular location is the membrane. Functionally, probable subunit of an amino acid transporter involved in the regulation of the amino acid metabolism. Stimulates amino acid export by activating nonselective amino acid facilitators. This chain is Protein GLUTAMINE DUMPER 4 (GDU4), found in Arabidopsis thaliana (Mouse-ear cress).